The sequence spans 345 residues: Ferrochelatase (345 aa).

Fe cation is bound by residues histidine 215 and glutamate 296.

The protein belongs to the ferrochelatase family.

Its subcellular location is the cytoplasm. It carries out the reaction heme b + 2 H(+) = protoporphyrin IX + Fe(2+). The protein operates within porphyrin-containing compound metabolism; protoheme biosynthesis; protoheme from protoporphyrin-IX: step 1/1. Catalyzes the ferrous insertion into protoporphyrin IX. The polypeptide is Ferrochelatase (Rhodopseudomonas palustris (strain HaA2)).